Reading from the N-terminus, the 101-residue chain is Small ribosomal subunit protein uS14 (101 aa).

The segment covering methionine 1 to asparagine 10 has biased composition (basic and acidic residues). A disordered region spans residues methionine 1 to lysine 23. The segment covering asparagine 11–lysine 23 has biased composition (basic residues).

The protein belongs to the universal ribosomal protein uS14 family. As to quaternary structure, part of the 30S ribosomal subunit. Contacts proteins S3 and S10.

Binds 16S rRNA, required for the assembly of 30S particles and may also be responsible for determining the conformation of the 16S rRNA at the A site. The sequence is that of Small ribosomal subunit protein uS14 from Bradyrhizobium sp. (strain BTAi1 / ATCC BAA-1182).